The chain runs to 1028 residues: Unconventional myosin-Ic (1028 aa).

Met1 carries the N-acetylmethionine modification. Positions 12 to 696 (GVQDFVLLEN…TLFATEDALE (685 aa)) constitute a Myosin motor domain. ATP-binding positions include Asn53, Tyr61, 104-113 (SGESGAGKTE), and 157-161 (NDNSS). N6-methyllysine is present on Lys348. The interval 573 to 595 (LSKLMEILMSKQPSYVRCIKPND) is actin-binding. 2 IQ domains span residues 699–728 (KHSI…SAVE) and 722–751 (MKHS…AVDV). Positions 850–1024 (KDNYPQSVPR…NGHLSVVAPR (175 aa)) constitute a TH1 domain.

This sequence belongs to the TRAFAC class myosin-kinesin ATPase superfamily. Myosin family. As to quaternary structure, interacts (via its IQ motifs) with calmodulin. As to expression, expressed in brain and the sacculus of the internal ear.

It is found in the cytoplasm. The protein localises to the cell membrane. Its subcellular location is the cell projection. It localises to the ruffle membrane. The protein resides in the cytoplasmic vesicle. It is found in the stereocilium membrane. In terms of biological role, myosins are actin-based motor molecules with ATPase activity. Unconventional myosins serve in intracellular movements. Their highly divergent tails are presumed to bind to membranous compartments, which would be moved relative to actin filaments. The protein is Unconventional myosin-Ic (Myo1c) of Aquarana catesbeiana (American bullfrog).